The sequence spans 429 residues: Enolase (429 aa).

Position 163 (Gln163) interacts with (2R)-2-phosphoglycerate. Catalysis depends on Glu205, which acts as the Proton donor. Positions 242, 287, and 314 each coordinate Mg(2+). Residues Lys339, Arg368, Ser369, and Lys390 each coordinate (2R)-2-phosphoglycerate. Residue Lys339 is the Proton acceptor of the active site.

It belongs to the enolase family. Mg(2+) serves as cofactor.

The protein localises to the cytoplasm. Its subcellular location is the secreted. It is found in the cell surface. It catalyses the reaction (2R)-2-phosphoglycerate = phosphoenolpyruvate + H2O. Its pathway is carbohydrate degradation; glycolysis; pyruvate from D-glyceraldehyde 3-phosphate: step 4/5. In terms of biological role, catalyzes the reversible conversion of 2-phosphoglycerate (2-PG) into phosphoenolpyruvate (PEP). It is essential for the degradation of carbohydrates via glycolysis. The polypeptide is Enolase (Magnetococcus marinus (strain ATCC BAA-1437 / JCM 17883 / MC-1)).